Here is a 314-residue protein sequence, read N- to C-terminus: MTRSISISVLIISVLIMIYVITRTSISNAYPIFAQQGYENPREATGRIVCANCHLANKPVDIEVPQAVLPNTVFEAVVRIPYDMQLKQVLANGKRGGLNVGAVLILPEGFELAPPDRISPEMKEKMGNLSFQNYRPTKRNILVIGPVPGQKYSEIVFPILSPDPATKKEVHFLKYPIYVGGNRGRGQIYPDGSKSNNTVYNATGAGLVSKIVRKEKGGYEITIADASDGHQAVDIIPPGPELLVSEGEYIKLDQPLTSNPNVGGFGQGDAEIVLQDPLRVQGLLFFLASVILAQIFLVLKKKQFEKVQLAEMNF.

A signal peptide spans 1–29 (MTRSISISVLIISVLIMIYVITRTSISNA). 4 residues coordinate heme: Y30, C50, C53, and H54. Residues 280–300 (VQGLLFFLASVILAQIFLVLK) form a helical membrane-spanning segment.

Belongs to the cytochrome f family. The 4 large subunits of the cytochrome b6-f complex are cytochrome b6, subunit IV (17 kDa polypeptide, petD), cytochrome f and the Rieske protein, while the 4 small subunits are PetG, PetL, PetM and PetN. The complex functions as a dimer. Requires heme as cofactor.

Its subcellular location is the plastid. It is found in the chloroplast thylakoid membrane. Its function is as follows. Component of the cytochrome b6-f complex, which mediates electron transfer between photosystem II (PSII) and photosystem I (PSI), cyclic electron flow around PSI, and state transitions. This is Cytochrome f from Illicium oligandrum (Star anise).